The sequence spans 957 residues: Glycine dehydrogenase (decarboxylating) (957 aa).

K708 bears the N6-(pyridoxal phosphate)lysine mark.

The protein belongs to the GcvP family. In terms of assembly, the glycine cleavage system is composed of four proteins: P, T, L and H. Pyridoxal 5'-phosphate is required as a cofactor.

The catalysed reaction is N(6)-[(R)-lipoyl]-L-lysyl-[glycine-cleavage complex H protein] + glycine + H(+) = N(6)-[(R)-S(8)-aminomethyldihydrolipoyl]-L-lysyl-[glycine-cleavage complex H protein] + CO2. In terms of biological role, the glycine cleavage system catalyzes the degradation of glycine. The P protein binds the alpha-amino group of glycine through its pyridoxal phosphate cofactor; CO(2) is released and the remaining methylamine moiety is then transferred to the lipoamide cofactor of the H protein. The polypeptide is Glycine dehydrogenase (decarboxylating) (Salmonella agona (strain SL483)).